The chain runs to 402 residues: Putative epoxide hydrolase AFT8 (402 aa).

It belongs to the peptidase S33 family.

It functions in the pathway mycotoxin biosynthesis. Its function is as follows. Putative epoxide hydrolase; part of the gene clusters that mediate the biosynthesis of the host-selective toxins (HSTs) AF-toxins responsible for Alternaria black spot of strawberry disease by the strawberry pathotype. AF-toxin I and III are valine derivatives of 2,3-dyhydroxy-isovaleric acid and 2-hydroxy-isovaleric acid respectively, while AF II is an isoleucine derivative of 2-hydroxy-valeric acid. These derivatives are bound to a 9,10-epoxy-8-hydroxy-9-methyl-decatrienoic acid (EDA) moiety. On cellular level, AF-toxins affect plasma membrane of susceptible cells and cause a sudden increase in loss of K(+) after a few minutes of toxin treatment. The aldo-keto reductase AFTS1 catalyzes the conversion of 2-keto-isovaleric acid (2-KIV) to 2-hydroxy-isovaleric acid (2-HIV) by reduction of its ketone to an alcohol. The acyl-CoA ligase AFT1, the hydrolase AFT2 and the enoyl-CoA hydratases AFT3 and AFT6, but also the polyketide synthase AFT9, the acyl-CoA dehydrogenase AFT10, the cytochrome P450 monooxygenase AFT11 and the oxidoreductase AFT12 are all involved in the biosynthesis of the AK-, AF- and ACT-toxin common EDA structural moiety. The exact function of each enzyme, and of additional enzymes identified within the AF-toxin clusters have still to be determined. The protein is Putative epoxide hydrolase AFT8 of Alternaria alternata (Alternaria rot fungus).